A 262-amino-acid polypeptide reads, in one-letter code: E3 ubiquitin-protein ligase NEURL3 (262 aa).

The NHR domain occupies 17–173; it reads ALRFHAEAKG…TTKAIELLDP (157 aa). An RING-type zinc finger spans residues 202–241; sequence CAICFYHAANTRLVPCGHTYFCRYCAWRVFSDTAKCPVCR.

In terms of assembly, (Microbial infection) Interacts with hepatitis C virus protein E1; this interaction prevents E1 interaction with E2 and subsequently inhibits viral infection.

The protein localises to the cytoplasm. It carries out the reaction S-ubiquitinyl-[E2 ubiquitin-conjugating enzyme]-L-cysteine + [acceptor protein]-L-lysine = [E2 ubiquitin-conjugating enzyme]-L-cysteine + N(6)-ubiquitinyl-[acceptor protein]-L-lysine.. It functions in the pathway protein modification; protein ubiquitination. E3 ubiquitin-protein ligase that plays a role in various biological processes such as lung development or innate immunity. Seems to utilize UBE2E1. Promotes innate antiviral response by catalyzing 'Lys-63'-linked ubiquitination of IRF7. Also inhibits hepatitis C virus assembly by directly binding to viral E1 envelope glycoprotein to disrupt its interaction with E2. Plays an essential role in TLR4-mediated activation of MAPK pathways by promoting 'Lys-48'-linked polyubiquitination of the phosphatase DUSP1/MKP1. The protein is E3 ubiquitin-protein ligase NEURL3 (NEURL3) of Homo sapiens (Human).